The sequence spans 449 residues: MSHIQLDYSKLAPFVADHELEYMQTQVTAVDKALREGTGAGNDFTGWIDLPENYDKEEFARIKKAAAKIQSDSEVLVVIGIGGSYLGARAAIEFLTHSFNNLLSKEERKAPQIFFAGNSISSTYLADLINVIGDRDFSVNVISKSGTTTEPAIAFRVFKELLINKYGKEEANKRIYATTDRAKGAVKVEADAEGWETFVIPDDVGGRFTVLTPVGLLPIAVSGADIDRLMEGANDARKEYGATSDLKENQAYQYAALRNILYRKGKTTEMLINYEPGMHYFSEWWKQLYGESEGKDGKGIFPAAADFSTDLHSMGQYVQEGMRNLFETVVKIENPRHSISIPEQNEDLDGLGYLQGKEIDFVNTKAFEGTLLAHTDGGVPNMIVKVPTMDAYSLGYVMYFFEIAVGISGYLNGVNPFDQPGVEAYKRNMFALLGKPGFEELAKDLNARL.

Glu291 serves as the catalytic Proton donor. Active-site residues include His312 and Lys426.

It belongs to the GPI family.

The protein resides in the cytoplasm. The enzyme catalyses alpha-D-glucose 6-phosphate = beta-D-fructose 6-phosphate. It participates in carbohydrate biosynthesis; gluconeogenesis. The protein operates within carbohydrate degradation; glycolysis; D-glyceraldehyde 3-phosphate and glycerone phosphate from D-glucose: step 2/4. Functionally, catalyzes the reversible isomerization of glucose-6-phosphate to fructose-6-phosphate. The protein is Glucose-6-phosphate isomerase of Enterococcus faecalis (strain ATCC 700802 / V583).